Consider the following 70-residue polypeptide: Conotoxin Cl9.1 (70 aa).

An N-terminal signal peptide occupies residues 1–20 (MMGKLGVVLFICLVLFPLET). The propeptide occupies 21-50 (LQLEGGQQADRHVDQLEGNPNRETRTIEVR). Cystine bridges form between cysteine 51/cysteine 63, cysteine 56/cysteine 67, and cysteine 61/cysteine 70.

This sequence belongs to the conotoxin M superfamily. Expressed by the venom duct.

It localises to the secreted. The polypeptide is Conotoxin Cl9.1 (Californiconus californicus (California cone)).